The following is a 154-amino-acid chain: MAAKESGEKLVALNKKARHLYEFLEKYEAGLVLMGSEVKSLRLGRISFKDGYVKFQDGEAFMIGVHIAPYENAGYAGHEPERPRKLLLHAAEINAMRVKVEQKGLTVVPVRVYFKNGRAKVEIALARGKKVFDRRDDLKSRDLDRDAARELARH.

This sequence belongs to the SmpB family.

It localises to the cytoplasm. Functionally, required for rescue of stalled ribosomes mediated by trans-translation. Binds to transfer-messenger RNA (tmRNA), required for stable association of tmRNA with ribosomes. tmRNA and SmpB together mimic tRNA shape, replacing the anticodon stem-loop with SmpB. tmRNA is encoded by the ssrA gene; the 2 termini fold to resemble tRNA(Ala) and it encodes a 'tag peptide', a short internal open reading frame. During trans-translation Ala-aminoacylated tmRNA acts like a tRNA, entering the A-site of stalled ribosomes, displacing the stalled mRNA. The ribosome then switches to translate the ORF on the tmRNA; the nascent peptide is terminated with the 'tag peptide' encoded by the tmRNA and targeted for degradation. The ribosome is freed to recommence translation, which seems to be the essential function of trans-translation. This is SsrA-binding protein from Solidesulfovibrio magneticus (strain ATCC 700980 / DSM 13731 / RS-1) (Desulfovibrio magneticus).